Reading from the N-terminus, the 714-residue chain is Polyribonucleotide nucleotidyltransferase (714 aa).

Residues Asp-489 and Asp-495 each contribute to the Mg(2+) site. The KH domain maps to 556–615 (PKIDTIKIDVDKIKVVIGKGGETIDKIIAETGVKIDIDEEGNVSIYSSDQDAINRAKEII). The region spanning 625–693 (GEVYHAKVVR…DKGRIDASMK (69 aa)) is the S1 motif domain. The tract at residues 691–714 (SMKALVPRPPKPEKSEAKKEGKHD) is disordered. A compositionally biased stretch (basic and acidic residues) spans 700–714 (PKPEKSEAKKEGKHD).

The protein belongs to the polyribonucleotide nucleotidyltransferase family. Mg(2+) is required as a cofactor.

It localises to the cytoplasm. It catalyses the reaction RNA(n+1) + phosphate = RNA(n) + a ribonucleoside 5'-diphosphate. Functionally, involved in mRNA degradation. Catalyzes the phosphorolysis of single-stranded polyribonucleotides processively in the 3'- to 5'-direction. The protein is Polyribonucleotide nucleotidyltransferase of Streptococcus equi subsp. zooepidemicus (strain MGCS10565).